Consider the following 781-residue polypeptide: uncharacterized protein (781 aa).

2 disordered regions span residues 1–27 and 56–268; these read MKKD…ELDD and NLHI…SDVH. Positions 11–27 are enriched in acidic residues; it reads ESLEEYDEENYTSELDD. Residues 57–73 are compositionally biased toward basic and acidic residues; it reads LHIDEKSKGNIHDDTNK. A compositionally biased stretch (basic residues) spans 80–94; it reads KRKGKLNNKKLKLKK. Residues 99 to 116 show a composition bias toward acidic residues; it reads SDEEEENDKNDKNDDDQY. 4 stretches are compositionally biased toward basic and acidic residues: residues 123 to 144, 170 to 188, 216 to 227, and 251 to 268; these read DEDR…KGDN, EKNH…HVSV, KTSKKNKNDKTN, and DDYH…SDVH. Positions 616-655 form a coiled coil; it reads NDTYTLSKLNNQINELTKKINILRGNLDKARKNHAAMKSN.

This is an uncharacterized protein from Plasmodium falciparum (isolate 3D7).